An 812-amino-acid chain; its full sequence is MKKYVTTKSVQPVAFRLTTLSLVMSAVLGSASVIAGEKLDMSFIQGGGGVNPEVWAALNGSYAPGRYLVDLSLNGKEAGKQILDVTPQDSNELCLTEAWLTKAGVYVSADYFREGYDATRQCYVLTKAPSVKVDFDVSTQSLALSIPQKGLVKMPENVDWDYGTSAFRVNYNANANTGRNNTSAFGSADLKANIGHWVVSSSATASGGDSGDNSTTINMFTATRAIRALSADLAVGKTSTGDSLLGSTGTYGVSLSRNNSMKPGNLGYTPVFSGIANGPSRVTLTQNGRLLHSEMVPAGPFSITDVPLYTSGDVTMKITGEDGRDEVQNFPLSVMAGQLSPGQHEFSVAAGLPDDDSDLKGGVFAASYGYGLDGLTLRAGGVFNQDWQGASAGVVAGLGYLGAVSADGAYATAKYRDGSHSGNKVQLSWSKQLETTNTGLRVSWSRQSEEYEGMSSFDPTELWSQSNHGRRTKDEWNAGISQPVGGLFSLSVSGWQRSYYPASMTGSYRYSDDNGKETGITGSLSTQIKGVSLNLGWSGSRNSRGENNWSASASVSVPFTLFDRRYSSSASVSTSKGGGTGFSTGVSGSLNDRFSYGLGGGRDGDGGTSSYLNASYSGDRAYLNGVLNHSQSGGTSGSVSVSGSVLAVPAAKDIMFSRTTGDTVAVVNVKDTPGVKVTSGDGQTDSDGNLVVPLNSYDWNTVTIDTGTLPLSTELTNTSQKVVPTDKAVVWMPFDALKVKRYLLQVKQRDGEFVPGGTWARDSKNTPLGFVANNGVLMINTVDAPGDITLGQCRIPAARLQDTEKLQEITCE.

The N-terminal stretch at 1–35 (MKKYVTTKSVQPVAFRLTTLSLVMSAVLGSASVIA) is a signal peptide. An intrachain disulfide couples Cys793 to Cys811.

This sequence belongs to the fimbrial export usher family.

The protein resides in the cell outer membrane. Its function is as follows. Involved in the export and assembly of K88ab fimbrial subunits across the outer membrane. The protein is Outer membrane usher protein FaeD (faeD) of Escherichia coli.